We begin with the raw amino-acid sequence, 324 residues long: NAD(P)H-dependent D-xylose reductase XYR1 (324 aa).

Catalysis depends on Y50, which acts as the Proton donor. H112 provides a ligand contact to substrate. NAD(+) is bound by residues 168 to 169, 217 to 226, and 273 to 283; these read SN, SSFGPASFKE, and KSSREKTMKSN.

Belongs to the aldo/keto reductase family.

The catalysed reaction is xylitol + NAD(+) = D-xylose + NADH + H(+). The enzyme catalyses xylitol + NADP(+) = D-xylose + NADPH + H(+). It participates in carbohydrate metabolism; D-xylose degradation. Functionally, catalyzes the initial reaction in the xylose utilization pathway by reducing D-xylose into xylitol. Xylose is a major component of hemicelluloses such as xylan. Most fungi utilize D-xylose via three enzymatic reactions, xylose reductase (XR), xylitol dehydrogenase (XDH), and xylulokinase, to form xylulose 5-phosphate, which enters pentose phosphate pathway. The chain is NAD(P)H-dependent D-xylose reductase XYR1 (XYR1) from Pyricularia oryzae (strain 70-15 / ATCC MYA-4617 / FGSC 8958) (Rice blast fungus).